Here is a 57-residue protein sequence, read N- to C-terminus: MLGWVVTFLVVALIAGLLGFGGIAGASIEIAKVIFFIAIVLFLVSAVVGLVRGRTRV.

2 helical membrane passes run 4–24 (WVVTFLVVALIAGLLGFGGIA) and 30–50 (IAKVIFFIAIVLFLVSAVVGL).

It belongs to the UPF0391 family.

It localises to the cell membrane. This is UPF0391 membrane protein RPB_2024 from Rhodopseudomonas palustris (strain HaA2).